The chain runs to 503 residues: Putative FBD-associated F-box protein At5g56410 (503 aa).

One can recognise an F-box domain in the interval 2–50 (DKITGFSDDELLVKILSFLPTKAAVTTSILSKQWKFLWMRLPKLEYHDD). The region spanning 361-412 (FWEQMITSVPQCLLSSLQTFKWLGNGDSIEGKDLATFILRNSCQLKTATISI) is the FBD domain.

This Arabidopsis thaliana (Mouse-ear cress) protein is Putative FBD-associated F-box protein At5g56410.